Here is an 861-residue protein sequence, read N- to C-terminus: DNA mismatch repair protein MutS (861 aa).

An ATP-binding site is contributed by 618–625 (GPNMGGKS).

The protein belongs to the DNA mismatch repair MutS family.

Functionally, this protein is involved in the repair of mismatches in DNA. It is possible that it carries out the mismatch recognition step. This protein has a weak ATPase activity. The chain is DNA mismatch repair protein MutS from Shewanella frigidimarina (strain NCIMB 400).